A 117-amino-acid polypeptide reads, in one-letter code: uncharacterized protein (117 aa).

Transmembrane regions (helical) follow at residues 9–29 (ITSH…FIPF) and 56–76 (VIIV…FFIP).

The protein resides in the membrane. This is an uncharacterized protein from Saccharomyces cerevisiae (strain ATCC 204508 / S288c) (Baker's yeast).